A 158-amino-acid polypeptide reads, in one-letter code: SsrA-binding protein (158 aa).

It belongs to the SmpB family.

It localises to the cytoplasm. Required for rescue of stalled ribosomes mediated by trans-translation. Binds to transfer-messenger RNA (tmRNA), required for stable association of tmRNA with ribosomes. tmRNA and SmpB together mimic tRNA shape, replacing the anticodon stem-loop with SmpB. tmRNA is encoded by the ssrA gene; the 2 termini fold to resemble tRNA(Ala) and it encodes a 'tag peptide', a short internal open reading frame. During trans-translation Ala-aminoacylated tmRNA acts like a tRNA, entering the A-site of stalled ribosomes, displacing the stalled mRNA. The ribosome then switches to translate the ORF on the tmRNA; the nascent peptide is terminated with the 'tag peptide' encoded by the tmRNA and targeted for degradation. The ribosome is freed to recommence translation, which seems to be the essential function of trans-translation. This chain is SsrA-binding protein, found in Psychrobacter sp. (strain PRwf-1).